The chain runs to 92 residues: Small ribosomal subunit protein uS19 (92 aa).

This sequence belongs to the universal ribosomal protein uS19 family.

Protein S19 forms a complex with S13 that binds strongly to the 16S ribosomal RNA. The protein is Small ribosomal subunit protein uS19 of Rickettsia typhi (strain ATCC VR-144 / Wilmington).